A 398-amino-acid chain; its full sequence is O-methyltransferase mpaG (398 aa).

Residue S144 coordinates (4E,8E)-10-(4,6-dihydroxy-7-methyl-3-oxo-1,3-dihydro-2-benzofuran-5-yl)-4,8-dimethyldeca-4,8-dienoate. S144 serves as a coordination point for 4-farnesyl-3,5-dihydroxy-6-methylphthalide. S144 contributes to the 6-O-desmethylmycophenolate binding site. N197 is a binding site for S-adenosyl-L-homocysteine. (4E,8E)-10-(4,6-dihydroxy-7-methyl-3-oxo-1,3-dihydro-2-benzofuran-5-yl)-4,8-dimethyldeca-4,8-dienoate is bound at residue Y199. Y199 is a binding site for 4-farnesyl-3,5-dihydroxy-6-methylphthalide. A 6-O-desmethylmycophenolate-binding site is contributed by Y199. Residues Y203, D237, G239, H244, D245, D264, and R265 each contribute to the S-adenosyl-L-homocysteine site. D264 lines the S-adenosyl-L-methionine pocket. Residues R265 and Q267 each coordinate (4E,8E)-10-(4,6-dihydroxy-7-methyl-3-oxo-1,3-dihydro-2-benzofuran-5-yl)-4,8-dimethyldeca-4,8-dienoate. R265 provides a ligand contact to 6-O-desmethylmycophenolate. 3 residues coordinate S-adenosyl-L-homocysteine: D286, I287, and H302. Residue S303 participates in (4E,8E)-10-(4,6-dihydroxy-7-methyl-3-oxo-1,3-dihydro-2-benzofuran-5-yl)-4,8-dimethyldeca-4,8-dienoate binding. S303 contributes to the 4-farnesyl-3,5-dihydroxy-6-methylphthalide binding site. S303 is a 6-O-desmethylmycophenolate binding site. H306 acts as the Proton acceptor in catalysis. Catalysis depends on residues E335 and E362.

It belongs to the class I-like SAM-binding methyltransferase superfamily. Cation-independent O-methyltransferase family. COMT subfamily. Homodimer.

The protein localises to the cytoplasm. It localises to the cytosol. It carries out the reaction (4E,8E)-10-(4,6-dihydroxy-7-methyl-3-oxo-1,3-dihydro-2-benzofuran-5-yl)-4,8-dimethyldeca-4,8-dienoate + S-adenosyl-L-methionine = (4E,8E)-10-(4-hydroxy-6-methoxy-7-methyl-3-oxo-1,3-dihydro-2-benzofuran-5-yl)-4,8-dimethyldeca-4,8-dienoate + S-adenosyl-L-homocysteine + H(+). The enzyme catalyses 4-farnesyl-3,5-dihydroxy-6-methylphthalide + S-adenosyl-L-methionine = 4-farnesyl-3,5-dihydroxy-6-methoxylphthalide + S-adenosyl-L-homocysteine + H(+). The catalysed reaction is 6-O-desmethylmycophenolate + S-adenosyl-L-methionine = mycophenolate + S-adenosyl-L-homocysteine + H(+). It participates in secondary metabolite biosynthesis; terpenoid biosynthesis. Its function is as follows. O-methyltransferase; part of the gene cluster that mediates the biosynthesis of mycophenolic acid (MPA), the first isolated antibiotic natural product in the world obtained from a culture of Penicillium brevicompactum in 1893. MpaG methylates farnesyl-DHMP-3C (FDHMP-3C) to yield MFDHMP-3C. The first step of the pathway is the synthesis of 5-methylorsellinic acid (5MOA) by the cytosolic polyketide synthase mpaC. 5MOA is then converted to the phthalide compound 5,7-dihydroxy-4,6-dimethylphthalide (DHMP) by the endoplasmic reticulum-bound cytochrome P450 monooxygenase mpaDE. MpaDE first catalyzes hydroxylation of 5-MOA to 4,6-dihydroxy-2-(hydroxymethyl)-3-methylbenzoic acid (DHMB). MpaDE then acts as a lactone synthase that catalyzes the ring closure to convert DHMB into DHMP. The next step is the prenylation of DHMP by the Golgi apparatus-associated prenyltransferase mpaA to yield farnesyl-DHMP (FDHMP). The ER-bound oxygenase mpaB then mediates the oxidative cleavage the C19-C20 double bond in FDHMP to yield FDHMP-3C via a mycophenolic aldehyde intermediate. The O-methyltransferase mpaG catalyzes the methylation of FDHMP-3C to yield MFDHMP-3C. MpaG and mpaB can also switch the order in which they act and, in this case, the conversion of FDHMP to MFDHMP-3C can take place via 5-O-methyl-FDHMP (MFDHMP). After the cytosolic methylation of FDHMP-3C, MFDHMP-3C enters into peroxisomes probably via free diffusion due to its low molecular weight. Upon a peroxisomal CoA ligation reaction, catalyzed by a beta-oxidation component enzyme acyl-CoA ligase ACL891, MFDHMP-3C-CoA would then be restricted to peroxisomes for the following beta-oxidation pathway steps. The peroxisomal beta-oxidation machinery than converts MFDHMP-3C-CoA into MPA_CoA, via a beta-oxidation chain-shortening process. Finally mpaH acts as a peroxisomal acyl-CoA hydrolase with high substrate specificity toward MPA-CoA to release the final product MPA. MpaH can also hydrolyze DMMPA-CoA to release demethylmycophenolic acid (DMMPA) that is further converted to MPA by mpaG. This Penicillium brevicompactum protein is O-methyltransferase mpaG.